A 647-amino-acid polypeptide reads, in one-letter code: UvrABC system protein C (647 aa).

The GIY-YIG domain occupies V16–V95. One can recognise a UVR domain in the interval D208–A243.

The protein belongs to the UvrC family. In terms of assembly, interacts with UvrB in an incision complex.

The protein localises to the cytoplasm. In terms of biological role, the UvrABC repair system catalyzes the recognition and processing of DNA lesions. UvrC both incises the 5' and 3' sides of the lesion. The N-terminal half is responsible for the 3' incision and the C-terminal half is responsible for the 5' incision. This is UvrABC system protein C from Mycobacterium marinum (strain ATCC BAA-535 / M).